Consider the following 244-residue polypeptide: Probable transcriptional regulatory protein DMR_30850 (244 aa).

The protein belongs to the TACO1 family.

The protein localises to the cytoplasm. This chain is Probable transcriptional regulatory protein DMR_30850, found in Solidesulfovibrio magneticus (strain ATCC 700980 / DSM 13731 / RS-1) (Desulfovibrio magneticus).